We begin with the raw amino-acid sequence, 682 residues long: Potassium-transporting ATPase ATP-binding subunit (682 aa).

4 helical membrane-spanning segments follow: residues 34–54 (PVMF…LAMV), 58–78 (IAGS…TVLF), 219–239 (IALT…TATL), and 254–274 (VLVA…LSAI). The 4-aspartylphosphate intermediate role is filled by D307. ATP is bound by residues D344, E348, 377–384 (FTAQSRMS), and K395. The Mg(2+) site is built by D518 and D522. 3 helical membrane passes run 588 to 608 (FAII…LNVM), 616 to 636 (AILS…PLAL), and 662 to 682 (LVVP…LGLA).

Belongs to the cation transport ATPase (P-type) (TC 3.A.3) family. Type IA subfamily. In terms of assembly, the system is composed of three essential subunits: KdpA, KdpB and KdpC.

The protein localises to the cell inner membrane. It catalyses the reaction K(+)(out) + ATP + H2O = K(+)(in) + ADP + phosphate + H(+). Part of the high-affinity ATP-driven potassium transport (or Kdp) system, which catalyzes the hydrolysis of ATP coupled with the electrogenic transport of potassium into the cytoplasm. This subunit is responsible for energy coupling to the transport system and for the release of the potassium ions to the cytoplasm. This Salmonella enteritidis PT4 (strain P125109) protein is Potassium-transporting ATPase ATP-binding subunit.